A 685-amino-acid polypeptide reads, in one-letter code: Putative pentatricopeptide repeat-containing protein At3g08820 (685 aa).

PPR repeat units lie at residues 75–109 (NIFL…GLYL), 110–144 (HGFT…GFNH), 145–175 (DVAA…IPDR), 176–210 (SVVT…GVKP), 211–245 (DSYF…EMQK), 246–276 (NSFV…MVEK), 277–311 (DIVT…NLKP), 312–346 (DQFS…EFLT), 347–381 (NLFM…DIVI), 383–412 (NAAI…GISP), 413–443 (DGST…ISCV), and 449–479 (TVEH…MPMR). The interval 484 to 559 (VWGALLSGCR…IPGYSWIELE (76 aa)) is type E motif. The tract at residues 560–590 (GKVHEFLADDKSHPLSDKIYAKLEDLGNEMR) is type E(+) motif. Residues 591 to 685 (LMGFVPTTEF…NGSCSCNDYW (95 aa)) are type DYW motif.

This sequence belongs to the PPR family. PCMP-H subfamily.

This chain is Putative pentatricopeptide repeat-containing protein At3g08820 (PCMP-H84), found in Arabidopsis thaliana (Mouse-ear cress).